A 389-amino-acid polypeptide reads, in one-letter code: Succinate--CoA ligase [ADP-forming] subunit beta (389 aa).

The 236-residue stretch at 9–244 folds into the ATP-grasp domain; that stretch reads KELLRQFNVP…IDEEDAAEIE (236 aa). ATP-binding positions include K46, 53–55, E99, A102, and E107; that span reads GRG. Residues N199 and D213 each coordinate Mg(2+). Substrate contacts are provided by residues N264 and 321-323; that span reads GIM.

It belongs to the succinate/malate CoA ligase beta subunit family. As to quaternary structure, heterotetramer of two alpha and two beta subunits. It depends on Mg(2+) as a cofactor.

The catalysed reaction is succinate + ATP + CoA = succinyl-CoA + ADP + phosphate. It carries out the reaction GTP + succinate + CoA = succinyl-CoA + GDP + phosphate. It functions in the pathway carbohydrate metabolism; tricarboxylic acid cycle; succinate from succinyl-CoA (ligase route): step 1/1. Succinyl-CoA synthetase functions in the citric acid cycle (TCA), coupling the hydrolysis of succinyl-CoA to the synthesis of either ATP or GTP and thus represents the only step of substrate-level phosphorylation in the TCA. The beta subunit provides nucleotide specificity of the enzyme and binds the substrate succinate, while the binding sites for coenzyme A and phosphate are found in the alpha subunit. In Polynucleobacter asymbioticus (strain DSM 18221 / CIP 109841 / QLW-P1DMWA-1) (Polynucleobacter necessarius subsp. asymbioticus), this protein is Succinate--CoA ligase [ADP-forming] subunit beta.